Reading from the N-terminus, the 325-residue chain is Germination protease (325 aa).

A propeptide spanning residues 1 to 7 is cleaved from the precursor; sequence MYNVRTD.

The protein belongs to the peptidase A25 family. As to quaternary structure, homotetramer. Autoproteolytically processed. The inactive tetrameric zymogen termed p46 autoprocesses to a smaller form termed p41, which is active only during spore germination.

It catalyses the reaction Endopeptidase action with P4 Glu or Asp, P1 preferably Glu &gt; Asp, P1' hydrophobic and P2' Ala.. Initiates the rapid degradation of small, acid-soluble proteins during spore germination. The sequence is that of Germination protease from Clostridium perfringens (strain SM101 / Type A).